The following is a 269-amino-acid chain: Neurotrophic factor BDNF precursor form (269 aa).

The signal sequence occupies residues Met-1 to Ala-18. Residues Ala-19–Arg-150 constitute a propeptide that is removed on maturation. Disordered regions lie at residues Ala-39–Leu-61 and Ala-82–Ala-104. Residue Asn-143 is glycosylated (N-linked (GlcNAc...) asparagine). 3 disulfides stabilise this stretch: Cys-163–Cys-230, Cys-208–Cys-259, and Cys-218–Cys-261.

Belongs to the NGF-beta family.

In terms of biological role, BDNF promotes the survival of neuronal populations that are all located either in the central nervous system or directly connected to it. The protein is Neurotrophic factor BDNF precursor form (bdnf) of Xiphophorus maculatus (Southern platyfish).